A 142-amino-acid polypeptide reads, in one-letter code: Large ribosomal subunit protein uL11 (142 aa).

It belongs to the universal ribosomal protein uL11 family. Part of the ribosomal stalk of the 50S ribosomal subunit. Interacts with L10 and the large rRNA to form the base of the stalk. L10 forms an elongated spine to which L12 dimers bind in a sequential fashion forming a multimeric L10(L12)X complex. One or more lysine residues are methylated.

Functionally, forms part of the ribosomal stalk which helps the ribosome interact with GTP-bound translation factors. In Buchnera aphidicola subsp. Schizaphis graminum (strain Sg), this protein is Large ribosomal subunit protein uL11.